Here is a 219-residue protein sequence, read N- to C-terminus: Small ribosomal subunit protein uS3c (219 aa).

The region spanning 39-118 is the KH type-2 domain; that stretch reads IRSFIRKYIQ…RLNIVITKVE (80 aa).

It belongs to the universal ribosomal protein uS3 family. As to quaternary structure, part of the 30S ribosomal subunit.

It localises to the plastid. The chain is Small ribosomal subunit protein uS3c (rps3) from Cuscuta obtusiflora (Peruvian dodder).